Reading from the N-terminus, the 196-residue chain is Large ribosomal subunit protein uL10 (196 aa).

Residues 163–196 (GAPAAAEAPAAEEAPAAEAAETEAPAEAAATEEN) form a disordered region. Positions 164 to 196 (APAAAEAPAAEEAPAAEAAETEAPAEAAATEEN) are enriched in low complexity.

Belongs to the universal ribosomal protein uL10 family. Part of the ribosomal stalk of the 50S ribosomal subunit. The N-terminus interacts with L11 and the large rRNA to form the base of the stalk. The C-terminus forms an elongated spine to which L12 dimers bind in a sequential fashion forming a multimeric L10(L12)X complex.

Functionally, forms part of the ribosomal stalk, playing a central role in the interaction of the ribosome with GTP-bound translation factors. The polypeptide is Large ribosomal subunit protein uL10 (Arthrobacter sp. (strain FB24)).